The chain runs to 243 residues: Phosphoribosyl isomerase A (243 aa).

Aspartate 9 (proton acceptor) is an active-site residue. The active-site Proton donor is the aspartate 128.

This sequence belongs to the HisA/HisF family.

Its subcellular location is the cytoplasm. The catalysed reaction is 1-(5-phospho-beta-D-ribosyl)-5-[(5-phospho-beta-D-ribosylamino)methylideneamino]imidazole-4-carboxamide = 5-[(5-phospho-1-deoxy-D-ribulos-1-ylimino)methylamino]-1-(5-phospho-beta-D-ribosyl)imidazole-4-carboxamide. It catalyses the reaction N-(5-phospho-beta-D-ribosyl)anthranilate = 1-(2-carboxyphenylamino)-1-deoxy-D-ribulose 5-phosphate. It functions in the pathway amino-acid biosynthesis; L-histidine biosynthesis; L-histidine from 5-phospho-alpha-D-ribose 1-diphosphate: step 4/9. Its pathway is amino-acid biosynthesis; L-tryptophan biosynthesis; L-tryptophan from chorismate: step 3/5. Involved in both the histidine and tryptophan biosynthetic pathways. The polypeptide is Phosphoribosyl isomerase A (Mycobacterium avium (strain 104)).